The chain runs to 280 residues: Dopamine receptor-interacting protein 1 (280 aa).

Interacts with DRD1, the dopamine D1 receptor.

In terms of biological role, could be a regulator of the dopamine receptor signaling pathway. The sequence is that of Dopamine receptor-interacting protein 1 (DORIP1) from Bos taurus (Bovine).